The primary structure comprises 323 residues: AA9 family lytic polysaccharide monooxygenase A (323 aa).

An N-terminal signal peptide occupies residues 1–19 (MKSFISLLGLSFLTCHASA). The Cu(2+) site is built by His20 and His90. Cys59 and Cys175 form a disulfide bridge. His161 and Gln170 together coordinate O2. Residue Tyr172 coordinates Cu(2+). N-linked (GlcNAc...) asparagine glycosylation occurs at Asn215. The CBM1 domain occupies 287–323 (AVVQKFGQCGGQGWTGGTTCVAGSTCTATNAYYSQCL).

It belongs to the polysaccharide monooxygenase AA9 family. The cofactor is Cu(2+).

It localises to the secreted. It catalyses the reaction [(1-&gt;4)-beta-D-glucosyl]n+m + reduced acceptor + O2 = 4-dehydro-beta-D-glucosyl-[(1-&gt;4)-beta-D-glucosyl]n-1 + [(1-&gt;4)-beta-D-glucosyl]m + acceptor + H2O.. Lytic polysaccharide monooxygenase (LPMO) that depolymerizes crystalline and amorphous polysaccharides via the oxidation of scissile alpha- or beta-(1-4)-glycosidic bonds, yielding C1 and C4 oxidation products. Catalysis by LPMOs requires the reduction of the active-site copper from Cu(II) to Cu(I) by a reducing agent and H(2)O(2) or O(2) as a cosubstrate. The sequence is that of AA9 family lytic polysaccharide monooxygenase A from Botryotinia fuckeliana (strain B05.10) (Noble rot fungus).